A 522-amino-acid chain; its full sequence is Lysine--tRNA ligase (522 aa).

Positions 44–52 match the 'HIGH' region motif; it reads PSGLPHIGT. Residues 290-294 carry the 'KMSKS' region motif; the sequence is KISKS. An ATP-binding site is contributed by K293.

This sequence belongs to the class-I aminoacyl-tRNA synthetase family.

The protein resides in the cytoplasm. It catalyses the reaction tRNA(Lys) + L-lysine + ATP = L-lysyl-tRNA(Lys) + AMP + diphosphate. The sequence is that of Lysine--tRNA ligase from Rickettsia peacockii (strain Rustic).